The following is a 325-amino-acid chain: Ribose-phosphate pyrophosphokinase (325 aa).

Residues 45–47 and 104–105 contribute to the ATP site; these read NGE and RQ. 2 residues coordinate Mg(2+): His-138 and Asp-178. Lys-202 is an active-site residue. D-ribose 5-phosphate is bound by residues Arg-204, Asp-230, and 234 to 238; that span reads DTGGT.

The protein belongs to the ribose-phosphate pyrophosphokinase family. Class I subfamily. Homohexamer. The cofactor is Mg(2+).

It is found in the cytoplasm. It catalyses the reaction D-ribose 5-phosphate + ATP = 5-phospho-alpha-D-ribose 1-diphosphate + AMP + H(+). The protein operates within metabolic intermediate biosynthesis; 5-phospho-alpha-D-ribose 1-diphosphate biosynthesis; 5-phospho-alpha-D-ribose 1-diphosphate from D-ribose 5-phosphate (route I): step 1/1. Involved in the biosynthesis of the central metabolite phospho-alpha-D-ribosyl-1-pyrophosphate (PRPP) via the transfer of pyrophosphoryl group from ATP to 1-hydroxyl of ribose-5-phosphate (Rib-5-P). This Corynebacterium glutamicum (strain ATCC 13032 / DSM 20300 / JCM 1318 / BCRC 11384 / CCUG 27702 / LMG 3730 / NBRC 12168 / NCIMB 10025 / NRRL B-2784 / 534) protein is Ribose-phosphate pyrophosphokinase.